Reading from the N-terminus, the 148-residue chain is uncharacterized protein (148 aa).

In terms of domain architecture, ABC transmembrane type-1 spans 25–148 (LSIGLIFSLI…YSITNIFIYN (124 aa)). The next 3 helical transmembrane spans lie at 26–46 (SIGL…PLII), 60–80 (IVII…STYI), and 127–147 (ITRV…IFIY).

It is found in the cell membrane. This is an uncharacterized protein from Staphylococcus epidermidis.